The following is a 159-amino-acid chain: Phosphopantetheine adenylyltransferase (159 aa).

Residue threonine 9 participates in substrate binding. ATP-binding positions include 9-10 (TF) and histidine 17. Residues lysine 41, leucine 73, and arginine 87 each contribute to the substrate site. ATP contacts are provided by residues 88-90 (GLR), glutamate 98, and 123-129 (YSFISST).

The protein belongs to the bacterial CoaD family. Homohexamer. The cofactor is Mg(2+).

Its subcellular location is the cytoplasm. The catalysed reaction is (R)-4'-phosphopantetheine + ATP + H(+) = 3'-dephospho-CoA + diphosphate. It functions in the pathway cofactor biosynthesis; coenzyme A biosynthesis; CoA from (R)-pantothenate: step 4/5. Reversibly transfers an adenylyl group from ATP to 4'-phosphopantetheine, yielding dephospho-CoA (dPCoA) and pyrophosphate. This Pseudomonas aeruginosa (strain LESB58) protein is Phosphopantetheine adenylyltransferase.